Reading from the N-terminus, the 342-residue chain is Tetraacyldisaccharide 4'-kinase (342 aa).

Residue 68-75 (TVGGTGKT) coordinates ATP.

This sequence belongs to the LpxK family.

The catalysed reaction is a lipid A disaccharide + ATP = a lipid IVA + ADP + H(+). Its pathway is glycolipid biosynthesis; lipid IV(A) biosynthesis; lipid IV(A) from (3R)-3-hydroxytetradecanoyl-[acyl-carrier-protein] and UDP-N-acetyl-alpha-D-glucosamine: step 6/6. Functionally, transfers the gamma-phosphate of ATP to the 4'-position of a tetraacyldisaccharide 1-phosphate intermediate (termed DS-1-P) to form tetraacyldisaccharide 1,4'-bis-phosphate (lipid IVA). This chain is Tetraacyldisaccharide 4'-kinase, found in Burkholderia ambifaria (strain MC40-6).